Reading from the N-terminus, the 431-residue chain is MAVSAVPHPSKQAQASEEGINQEKCINEEYKIWKKNSPFLYDLIITRALEWPCMSLQWYPEQQIFAEHGYTEQKMFLGVRADVGKYLLAVASIQLPYLNQTVPPTTMEGASAGDESSLRVNISNLYSHPESVCSAKLMPQDDSCVATVGNYHNDVLVFDKESFESYSSASESPLKPKYRLTKHTQPCTSVCWNFLSKGTLVSGSQDATLSCWDLNAYNESDSASVLKVHISSHEKQVSDVRFHYKHQDLLASVSYDQYLHVHDIRRPDASTKPARSVHAHSGPIHSVAFNPHNDFILATCSTDKTIALWDLRNLNQRLHTLEGHEDIVTKISFSPHEEPILASTSADRRTLVWDLSRIGEDQPAEEAQDGPPELLFMHGGHTSCTIDMDWCPNYNWTMATAAEDNILQIWTPSRSIWGNEQLEEDATAYLS.

6 WD repeats span residues 127 to 159 (SHPE…LVFD), 182 to 213 (KHTQ…SCWD), 232 to 263 (SHEK…HVHD), 279 to 310 (AHSG…ALWD), 323 to 354 (GHED…LVWD), and 380 to 411 (GHTS…QIWT).

This sequence belongs to the WD repeat HIR1 family. In terms of assembly, heterotetramer of alp13, clr6, prw1 and pst2.

The protein localises to the nucleus. Its function is as follows. Has a role in chromatin assembly and chromosome segregation. Involved in the deacetylation of histones. In Schizosaccharomyces pombe (strain 972 / ATCC 24843) (Fission yeast), this protein is RbAp48-related WD40 repeat-containing protein prw1 (prw1).